We begin with the raw amino-acid sequence, 115 residues long: Photosystem II reaction center Psb28 protein (115 aa).

It belongs to the Psb28 family. Part of the photosystem II complex.

The protein localises to the plastid. The protein resides in the chloroplast thylakoid membrane. The chain is Photosystem II reaction center Psb28 protein from Trieres chinensis (Marine centric diatom).